A 179-amino-acid polypeptide reads, in one-letter code: MYNINDLIYNWSFALFDLANDEGILKELTADVVKVIKVLKRNKRYLEILNSYNVDLDVKFQKIDEAFSGNNIHLINFIKLAAKAAVAKFLIQILVRFVEISNQKLNVKYGTIFTTIALDEVKVKEFESKISKKLNAKVILKNEIDPSLIAGIKIKIDDYVVENSISGYLNELKKSVIKK.

This sequence belongs to the ATPase delta chain family. As to quaternary structure, F-type ATPases have 2 components, F(1) - the catalytic core - and F(0) - the membrane proton channel. F(1) has five subunits: alpha(3), beta(3), gamma(1), delta(1), epsilon(1). F(0) has three main subunits: a(1), b(2) and c(10-14). The alpha and beta chains form an alternating ring which encloses part of the gamma chain. F(1) is attached to F(0) by a central stalk formed by the gamma and epsilon chains, while a peripheral stalk is formed by the delta and b chains.

The protein localises to the cell membrane. Its function is as follows. F(1)F(0) ATP synthase produces ATP from ADP in the presence of a proton or sodium gradient. F-type ATPases consist of two structural domains, F(1) containing the extramembraneous catalytic core and F(0) containing the membrane proton channel, linked together by a central stalk and a peripheral stalk. During catalysis, ATP synthesis in the catalytic domain of F(1) is coupled via a rotary mechanism of the central stalk subunits to proton translocation. Functionally, this protein is part of the stalk that links CF(0) to CF(1). It either transmits conformational changes from CF(0) to CF(1) or is implicated in proton conduction. In Metamycoplasma arthritidis (strain 158L3-1) (Mycoplasma arthritidis), this protein is ATP synthase subunit delta.